Here is a 39-residue protein sequence, read N- to C-terminus: Hementin (39 aa).

Requires a divalent metal cation as cofactor. Expressed mainly in the posterior salivary glands and, to a lesser extent, in the anterior salivary glands and secreted into the proboscis (at protein level).

Its subcellular location is the secreted. With respect to regulation, inhibited by EDTA, cysteine, DTT and sodium phosphate. Partially inhibited by EGTA, citrate, Tris and glycine. Not inhibited by DFP, PMSF, iodoacetic acid and leupeptin. Requires sodium chloride concentrations higher than 0.15 M for activity. Metalloprotease with anticoagulant activity. Cleaves fibrinogen Aalpha (FGA), gamma (FGG) and Bbeta (FGB) chains after positions 'Asn-121', 'Lys-160' and 'Pro-102', respectively. Breaks down cross-linked and non-cross-linked fibrin clots. Prevents and reverts platelet aggregation induced by ADP and collagen. Prevents thrombin-induced platelet clotting. Does not affect plasma levels of coagulation factors prothrombin (F2), V (F5), VII (F7), VIII (F8), IX (F9), X (F10), XI (F11), XII (F12), plasma kallikrein (KLKB1) and kininogen-1 (KNG1). The protein is Hementin of Haementeria ghilianii (Amazon leech).